Consider the following 427-residue polypeptide: Arginine biosynthesis bifunctional protein ArgJ (427 aa).

Substrate is bound by residues Thr174, Lys200, Thr211, Glu291, Asn422, and Thr427. Thr211 (nucleophile) is an active-site residue.

Belongs to the ArgJ family. In terms of assembly, heterotetramer of two alpha and two beta chains.

It localises to the cytoplasm. It carries out the reaction N(2)-acetyl-L-ornithine + L-glutamate = N-acetyl-L-glutamate + L-ornithine. The catalysed reaction is L-glutamate + acetyl-CoA = N-acetyl-L-glutamate + CoA + H(+). The protein operates within amino-acid biosynthesis; L-arginine biosynthesis; L-ornithine and N-acetyl-L-glutamate from L-glutamate and N(2)-acetyl-L-ornithine (cyclic): step 1/1. It functions in the pathway amino-acid biosynthesis; L-arginine biosynthesis; N(2)-acetyl-L-ornithine from L-glutamate: step 1/4. In terms of biological role, catalyzes two activities which are involved in the cyclic version of arginine biosynthesis: the synthesis of N-acetylglutamate from glutamate and acetyl-CoA as the acetyl donor, and of ornithine by transacetylation between N(2)-acetylornithine and glutamate. The chain is Arginine biosynthesis bifunctional protein ArgJ from Prochlorococcus marinus (strain MIT 9313).